The primary structure comprises 75 residues: UPF0057 membrane protein At2g24040 (75 aa).

The next 2 helical transmembrane spans lie at 4 to 24 and 33 to 53; these read SCEL…GVCL and FFIC…YAIY.

This sequence belongs to the UPF0057 (PMP3) family.

Its subcellular location is the membrane. In Arabidopsis thaliana (Mouse-ear cress), this protein is UPF0057 membrane protein At2g24040.